We begin with the raw amino-acid sequence, 450 residues long: Phosphoglucosamine mutase (450 aa).

Ser-102 acts as the Phosphoserine intermediate in catalysis. Mg(2+) is bound by residues Ser-102, Asp-244, Asp-246, and Asp-248. Ser-102 carries the phosphoserine modification.

This sequence belongs to the phosphohexose mutase family. Requires Mg(2+) as cofactor. Post-translationally, activated by phosphorylation.

It catalyses the reaction alpha-D-glucosamine 1-phosphate = D-glucosamine 6-phosphate. In terms of biological role, catalyzes the conversion of glucosamine-6-phosphate to glucosamine-1-phosphate. The protein is Phosphoglucosamine mutase of Solidesulfovibrio magneticus (strain ATCC 700980 / DSM 13731 / RS-1) (Desulfovibrio magneticus).